The chain runs to 728 residues: Protein Hook homolog 1 (728 aa).

N-acetylmethionine is present on Met-1. The segment at Met-1–Glu-555 is sufficient for interaction with microtubules. The Calponin-homology (CH) domain occupies Leu-12–Ala-128. Coiled-coil stretches lie at residues Pro-169–Gln-434 and Leu-477–Arg-658. Positions Pro-169–Asp-444 are sufficient for homodimerization, interaction wit HOOK2, HOOK3 and AP4M1. Ser-235 bears the Phosphoserine mark. The tract at residues Gln-481–Leu-512 is disordered. A compositionally biased stretch (basic and acidic residues) spans Met-503 to Leu-512. The sufficient for interaction with AKTIP and VPS18 stretch occupies residues Phe-657–Asp-728. At Thr-699 the chain carries Phosphothreonine. Phosphoserine occurs at positions 719 and 727.

It belongs to the hook family. In terms of assembly, self-associates. Component of the FTS/Hook/FHIP complex (FHF complex), composed of AKTIP/FTS, FHIP1B, and one or more members of the Hook family of proteins HOOK1, HOOK2, and HOOK3. Interacts directly with AKTIP/FTS, HOOK2 and HOOK3. Associates with several subunits of the homotypic vesicular sorting complex (the HOPS complex) including VPS16, VPS18, VPS39 and VPS41; these interactions may be indirect. Interacts with CCDC181. Interacts (via coiled-coil region) with RIMBP3 (via C-terminus). Interacts with LRGUK (via guanylate kinase-like domain). Interacts with microtubules. May interact with CLN3. Interacts with AP4M1; the interaction is direct, mediates the interaction between FTS-Hook-FHIP (FHF) complex and AP-4 and the perinuclear distribution of AP-4.

It localises to the cytoplasm. The protein resides in the cytoskeleton. Its function is as follows. Component of the FTS/Hook/FHIP complex (FHF complex). The FHF complex may function to promote vesicle trafficking and/or fusion via the homotypic vesicular protein sorting complex (the HOPS complex). FHF complex promotes the distribution of AP-4 complex to the perinuclear area of the cell. Required for spermatid differentiation. Probably involved in the positioning of the microtubules of the manchette and the flagellum in relation to the membrane skeleton. The protein is Protein Hook homolog 1 of Homo sapiens (Human).